The following is a 261-amino-acid chain: Proliferating cell nuclear antigen (261 aa).

N6-acetyllysine occurs at positions 14, 77, and 80. A DNA-binding region spans residues 61 to 80 (RCDRNLAMGVNLTSMSKILK). Cys-135 and Cys-162 form a disulfide bridge. A Glycyl lysine isopeptide (Lys-Gly) (interchain with G-Cter in SUMO2); alternate cross-link involves residue Lys-164. Residue Lys-164 forms a Glycyl lysine isopeptide (Lys-Gly) (interchain with G-Cter in ubiquitin); alternate linkage. Tyr-211 is modified (phosphotyrosine; by EGFR). The residue at position 248 (Lys-248) is an N6-acetyllysine. A Glycyl lysine isopeptide (Lys-Gly) (interchain with G-Cter in SUMO2) cross-link involves residue Lys-254.

The protein belongs to the PCNA family. In terms of assembly, homotrimer. Interacts with p300/EP300; the interaction occurs on chromatin in UV-irradiated damaged cells. Interacts with CREBBP (via transactivation domain and C-terminus); the interaction occurs on chromatin in UV-irradiated damaged cells. Directly interacts with POLD1, POLD3 and POLD4 subunits of the DNA polymerase delta complex, POLD3 being the major interacting partner; the interaction with POLD3 is inhibited by CDKN1A/p21(CIP1). Forms a complex with activator 1 heteropentamer in the presence of ATP. Interacts with EXO1, POLH, POLK, DNMT1, ERCC5, FEN1, CDC6 and POLDIP2. Interacts with POLB. Interacts with APEX2; this interaction is triggered by reactive oxygen species and increased by misincorporation of uracil in nuclear DNA. Forms a ternary complex with DNTTIP2 and core histone. Interacts with KCTD10. Interacts with PPP1R15A. Interacts with SMARCA5/SNF2H. Interacts with BAZ1B/WSTF; the interaction is direct and is required for BAZ1B/WSTF binding to replication foci during S phase. Interacts with HLTF and SHPRH. Interacts with NUDT15; this interaction is disrupted in response to UV irradiation and acetylation. Interacts with CDKN1A/p21(CIP1) and CDT1; interacts via their PIP-box which also recruits the DCX(DTL) complex. The interaction with CDKN1A inhibits POLD3 binding. Interacts with DDX11. Interacts with EGFR; positively regulates PCNA. Interacts with PARPBP. Interacts (when ubiquitinated) with SPRTN; leading to enhance RAD18-mediated PCNA ubiquitination. Interacts (when polyubiquitinated) with ZRANB3. Interacts with SMARCAD1. Interacts with CDKN1C. Interacts with PCLAF (via PIP-box). Interacts with RTEL1 (via PIP-box); the interaction is direct and essential for the suppression of telomere fragility. Interacts with FAM111A (via PIP-box); the interaction is direct and required for PCNA loading on chromatin binding. Interacts with LIG1. Interacts with SETMAR. Interacts with ANKRD17. Interacts with FBXO18/FBH1 (via PIP-box); the interaction recruits the DCX(DTL) complex and promotes ubiquitination and degradation of FBXO18/FBH1. Interacts with POLN. Interacts with SDE2 (via PIP-box); the interaction is direct and prevents ultraviolet light induced monoubiquitination. Component of the replisome complex composed of at least DONSON, MCM2, MCM7, PCNA and TICRR; interaction at least with PCNA occurs during DNA replication. Interacts with MAPK15; the interaction is chromatin binding dependent and prevents MDM2-mediated PCNA destruction by inhibiting the association of PCNA with MDM2. Interacts with PARP10 (via PIP-box). Interacts with DDI2. Interacts with HMCES (via PIP-box). Interacts with TRAIP (via PIP-box). Interacts with UHRF2. Interacts with ALKBH2; this interaction is enhanced during the S-phase of the cell cycle. Interacts with ATAD5; the interaction promotes USP1-mediated PCNA deubiquitination. Interacts (when phosphorylated) with GRB2. Interacts with ANG. Interacts with nuclear UNG; this interaction mediates UNG recruitment to S-phase replication foci. Interacts with ERCC6L2 (via an atypical PIP-box); this interaction facilitates cenrtomeric localization of ERCC6L2. In terms of processing, phosphorylated. Phosphorylation at Tyr-211 by EGFR stabilizes chromatin-associated PCNA. Acetylated by CREBBP and p300/EP300; preferentially acetylated by CREBBP on Lys-80, Lys-13 and Lys-14 and on Lys-77 by p300/EP300 upon loading on chromatin in response to UV irradiation. Lysine acetylation disrupts association with chromatin, hence promoting PCNA ubiquitination and proteasomal degradation in response to UV damage in a CREBBP- and EP300-dependent manner. Acetylation disrupts interaction with NUDT15 and promotes degradation. Post-translationally, ubiquitinated. Following DNA damage, can be either monoubiquitinated to stimulate direct bypass of DNA lesions by specialized DNA polymerases or polyubiquitinated to promote recombination-dependent DNA synthesis across DNA lesions by template switching mechanisms. Following induction of replication stress, monoubiquitinated by the UBE2B-RAD18 complex on Lys-164, leading to recruit translesion (TLS) polymerases, which are able to synthesize across DNA lesions in a potentially error-prone manner. An error-free pathway also exists and requires non-canonical polyubiquitination on Lys-164 through 'Lys-63' linkage of ubiquitin moieties by the E2 complex UBE2N-UBE2V2 and the E3 ligases, HLTF, RNF8 and SHPRH. This error-free pathway, also known as template switching, employs recombination mechanisms to synthesize across the lesion, using as a template the undamaged, newly synthesized strand of the sister chromatid. Monoubiquitination at Lys-164 also takes place in undamaged proliferating cells, and is mediated by the DCX(DTL) complex, leading to enhance PCNA-dependent translesion DNA synthesis. Sumoylated during S phase. In terms of processing, methylated on glutamate residues by ARMT1.

The protein resides in the nucleus. Its function is as follows. Auxiliary protein of DNA polymerase delta and epsilon, is involved in the control of eukaryotic DNA replication by increasing the polymerase's processibility during elongation of the leading strand. Induces a robust stimulatory effect on the 3'-5' exonuclease and 3'-phosphodiesterase, but not apurinic-apyrimidinic (AP) endonuclease, APEX2 activities. Has to be loaded onto DNA in order to be able to stimulate APEX2. Plays a key role in DNA damage response (DDR) by being conveniently positioned at the replication fork to coordinate DNA replication with DNA repair and DNA damage tolerance pathways. Acts as a loading platform to recruit DDR proteins that allow completion of DNA replication after DNA damage and promote postreplication repair: Monoubiquitinated PCNA leads to recruitment of translesion (TLS) polymerases, while 'Lys-63'-linked polyubiquitination of PCNA is involved in error-free pathway and employs recombination mechanisms to synthesize across the lesion. The polypeptide is Proliferating cell nuclear antigen (Pcna) (Mus musculus (Mouse)).